The primary structure comprises 117 residues: DNA-directed RNA polymerase subunit omega (117 aa).

This sequence belongs to the RNA polymerase subunit omega family. In terms of assembly, the RNAP catalytic core consists of 2 alpha, 1 beta, 1 beta' and 1 omega subunit. When a sigma factor is associated with the core the holoenzyme is formed, which can initiate transcription.

It catalyses the reaction RNA(n) + a ribonucleoside 5'-triphosphate = RNA(n+1) + diphosphate. Promotes RNA polymerase assembly. Latches the N- and C-terminal regions of the beta' subunit thereby facilitating its interaction with the beta and alpha subunits. The chain is DNA-directed RNA polymerase subunit omega from Ruegeria pomeroyi (strain ATCC 700808 / DSM 15171 / DSS-3) (Silicibacter pomeroyi).